We begin with the raw amino-acid sequence, 415 residues long: Serine hydroxymethyltransferase 2 (415 aa).

(6S)-5,6,7,8-tetrahydrofolate is bound by residues L122 and 126 to 128 (GHL). K230 carries the post-translational modification N6-(pyridoxal phosphate)lysine.

This sequence belongs to the SHMT family. In terms of assembly, homodimer. The cofactor is pyridoxal 5'-phosphate.

It localises to the cytoplasm. The catalysed reaction is (6R)-5,10-methylene-5,6,7,8-tetrahydrofolate + glycine + H2O = (6S)-5,6,7,8-tetrahydrofolate + L-serine. It functions in the pathway one-carbon metabolism; tetrahydrofolate interconversion. The protein operates within amino-acid biosynthesis; glycine biosynthesis; glycine from L-serine: step 1/1. Catalyzes the reversible interconversion of serine and glycine with tetrahydrofolate (THF) serving as the one-carbon carrier. This reaction serves as the major source of one-carbon groups required for the biosynthesis of purines, thymidylate, methionine, and other important biomolecules. Also exhibits THF-independent aldolase activity toward beta-hydroxyamino acids, producing glycine and aldehydes, via a retro-aldol mechanism. The protein is Serine hydroxymethyltransferase 2 of Burkholderia lata (strain ATCC 17760 / DSM 23089 / LMG 22485 / NCIMB 9086 / R18194 / 383).